The chain runs to 150 residues: 6,7-dimethyl-8-ribityllumazine synthase (150 aa).

Residues F11, T43 to E45, and A67 to I69 each bind 5-amino-6-(D-ribitylamino)uracil. A72–T73 contacts (2S)-2-hydroxy-3-oxobutyl phosphate. Catalysis depends on H75, which acts as the Proton donor. L100 is a 5-amino-6-(D-ribitylamino)uracil binding site. R115 contributes to the (2S)-2-hydroxy-3-oxobutyl phosphate binding site.

Belongs to the DMRL synthase family.

The enzyme catalyses (2S)-2-hydroxy-3-oxobutyl phosphate + 5-amino-6-(D-ribitylamino)uracil = 6,7-dimethyl-8-(1-D-ribityl)lumazine + phosphate + 2 H2O + H(+). Its pathway is cofactor biosynthesis; riboflavin biosynthesis; riboflavin from 2-hydroxy-3-oxobutyl phosphate and 5-amino-6-(D-ribitylamino)uracil: step 1/2. Functionally, catalyzes the formation of 6,7-dimethyl-8-ribityllumazine by condensation of 5-amino-6-(D-ribitylamino)uracil with 3,4-dihydroxy-2-butanone 4-phosphate. This is the penultimate step in the biosynthesis of riboflavin. This Staphylothermus marinus (strain ATCC 43588 / DSM 3639 / JCM 9404 / F1) protein is 6,7-dimethyl-8-ribityllumazine synthase.